The primary structure comprises 611 residues: MEPAAPSCNMIMIADQASVNAHGRHLDENRVYPSDKVPAHVANKILESGTETVRCDLTLEDMLGDYEYDDPTEEEKILMDRIADHVGNDNSDMAIKHAAGPEMNIDIVTAAASMSGITTASHSALPIRRPNTPDFRRHSEKKAKKHKNKQRQRLDDVVAKLHKPSESEADEDFIFQQPQEEEYQEEQEPQVISSSPQHFDERSPSRSSSDHGGHSGGNSRDGQFYLSSGSEDEDDEDDERVDSGYRGSSRSEDSSRYRPHGGSHSSRSSIKSSGSGSSRHHHKRKAVPERHHPFTPPSAKRYAAAAPSSRYECPVRVDSSDSDDAPTMVQRGTLKIKSFRPPSSGSNSNKHSSSSGGSTSSSHKKQQQQQAPSKKPVMSSGSDKIRDMVDRTAGGYVAPNAHKKCREDKSRKYPARALEYKNLPFRPQSPQYLLGKAIQFCKEETVHDKFIMLFYTRSQDVRKAVDETRARMGMRPNLSISCPFMTEHTKPINHSRETIDRTSAACTAGTQAVWDMEERRGQKCVPRTSDYRSMIIQAANPPDFLGAVKTCLHLSQVFPKQVCMRLCSITGGLNPLPIYEETVSSYVNAQFEADDISHHEDESGEYESDCE.

Disordered regions lie at residues Thr119–Asp155 and Glu180–Asp383. The segment covering His138–Arg151 has biased composition (basic residues). The Nuclear localization signal motif lies at Lys141 to Lys147. Over residues His198–Gly213 the composition is skewed to basic and acidic residues. Residues Ser230–Arg240 show a composition bias toward acidic residues. Residues His260–Ser277 show a composition bias toward low complexity. Residues Arg279–Lys285 carry the Nuclear localization signal motif. The segment covering Pro341–Pro376 has biased composition (low complexity).

It localises to the host nucleus. In terms of biological role, strong transcriptional activator of the E1 promoter, shows an autoregulatory function by repression of the IE1/IE3 promoter. The IE1 protein has some additive effect on the trans-activating properties of the IE3 protein. This is Immediate-early protein 3 (IE1) from Mus musculus (Mouse).